A 207-amino-acid polypeptide reads, in one-letter code: Large ribosomal subunit protein uL4 (207 aa).

The tract at residues 56–75 is disordered; the sequence is EVSGTTKKPFKQKGTGNARQ.

It belongs to the universal ribosomal protein uL4 family. As to quaternary structure, part of the 50S ribosomal subunit.

One of the primary rRNA binding proteins, this protein initially binds near the 5'-end of the 23S rRNA. It is important during the early stages of 50S assembly. It makes multiple contacts with different domains of the 23S rRNA in the assembled 50S subunit and ribosome. Functionally, forms part of the polypeptide exit tunnel. This chain is Large ribosomal subunit protein uL4, found in Rickettsia prowazekii (strain Madrid E).